We begin with the raw amino-acid sequence, 49 residues long: uncharacterized protein (49 aa).

A helical transmembrane segment spans residues 6 to 28 (IYPLTVFYFFAIEMSVFCYYNWF).

Its subcellular location is the membrane. This is an uncharacterized protein from Saccharomyces cerevisiae (strain ATCC 204508 / S288c) (Baker's yeast).